Here is a 120-residue protein sequence, read N- to C-terminus: NAD(P)H-quinone oxidoreductase subunit 3, chloroplastic (120 aa).

3 consecutive transmembrane segments (helical) span residues 9-29 (IFWA…LISG), 64-84 (MFAL…PWAM), and 88-108 (VLGV…IVGS).

Belongs to the complex I subunit 3 family. NDH is composed of at least 16 different subunits, 5 of which are encoded in the nucleus.

The protein resides in the plastid. It localises to the chloroplast thylakoid membrane. The catalysed reaction is a plastoquinone + NADH + (n+1) H(+)(in) = a plastoquinol + NAD(+) + n H(+)(out). It carries out the reaction a plastoquinone + NADPH + (n+1) H(+)(in) = a plastoquinol + NADP(+) + n H(+)(out). NDH shuttles electrons from NAD(P)H:plastoquinone, via FMN and iron-sulfur (Fe-S) centers, to quinones in the photosynthetic chain and possibly in a chloroplast respiratory chain. The immediate electron acceptor for the enzyme in this species is believed to be plastoquinone. Couples the redox reaction to proton translocation, and thus conserves the redox energy in a proton gradient. The chain is NAD(P)H-quinone oxidoreductase subunit 3, chloroplastic from Acorus calamus var. americanus (American sweet flag).